Consider the following 296-residue polypeptide: MSWINRIFSKSPSSSTRKANVPEGVWTKCTACEQVLYSEELKRNLYVCPKCGHHMRIDARERLLNLLDEDSSQEIAADLEPKDILKFKDLKKYKDRINAAQKETGEKDALITMTGTLYNMPIVVAASNFAFMGGSMGSVVGAKFVKAAEKAMEMNCPFVCFSASGGARMQEALFSLMQMAKTSAVLAQMREKGVPFISVLTDPTLGGVSASFAMLGDLNIAEPKALIGFAGPRVIEQTVREKLPEGFQRSEFLLEKGAIDMIVKRSEMRQTLASVLSKLTNQPSPFVEPELISEDE.

In terms of domain architecture, CoA carboxyltransferase N-terminal spans 25–294; it reads VWTKCTACEQ…PFVEPELISE (270 aa). Zn(2+)-binding residues include cysteine 29, cysteine 32, cysteine 48, and cysteine 51. The segment at 29 to 51 adopts a C4-type zinc-finger fold; that stretch reads CTACEQVLYSEELKRNLYVCPKC.

It belongs to the AccD/PCCB family. Acetyl-CoA carboxylase is a heterohexamer composed of biotin carboxyl carrier protein (AccB), biotin carboxylase (AccC) and two subunits each of ACCase subunit alpha (AccA) and ACCase subunit beta (AccD). The cofactor is Zn(2+).

The protein resides in the cytoplasm. It carries out the reaction N(6)-carboxybiotinyl-L-lysyl-[protein] + acetyl-CoA = N(6)-biotinyl-L-lysyl-[protein] + malonyl-CoA. Its pathway is lipid metabolism; malonyl-CoA biosynthesis; malonyl-CoA from acetyl-CoA: step 1/1. Functionally, component of the acetyl coenzyme A carboxylase (ACC) complex. Biotin carboxylase (BC) catalyzes the carboxylation of biotin on its carrier protein (BCCP) and then the CO(2) group is transferred by the transcarboxylase to acetyl-CoA to form malonyl-CoA. The sequence is that of Acetyl-coenzyme A carboxylase carboxyl transferase subunit beta from Haemophilus influenzae (strain 86-028NP).